We begin with the raw amino-acid sequence, 1578 residues long: Formin-2 (1578 aa).

Basic and acidic residues-rich tracts occupy residues 1–17, 26–35, and 57–66; these read MGNQ…DASH, AGPRDAEITK, and TSKKKSKSDS. Residues 1–73 are disordered; that stretch reads MGNQDGKLKR…SDSRASVFSN (73 aa). At S89 the chain carries Phosphoserine. Disordered regions lie at residues 208–230, 244–383, and 401–458; these read KLLL…QPGA, EAEK…PSPR, and RQLS…GLSR. Composition is skewed to polar residues over residues 273–282 and 290–300; these read SSGSHLTSET and SAVTDSLSSPA. Over residues 322 to 333 the composition is skewed to acidic residues; the sequence is DTDEECEEDAFE. The segment covering 351–364 has biased composition (basic and acidic residues); the sequence is ASQRLEKEPEEGMR. Composition is skewed to low complexity over residues 404 to 418 and 427 to 442; these read SSPN…NQSP and SVSR…AAAP. Phosphoserine occurs at positions 459, 489, and 493. Residues 587–634 are disordered; the sequence is SMDYSEGQFPRREPSMWPSSKLPEEEPSPKDVDTEPKSSILESPKKCS. Positions 608 to 622 are enriched in basic and acidic residues; that stretch reads LPEEEPSPKDVDTEP. Residues 643–683 are a coiled coil; that stretch reads DVKSEGQATVIQQLEQTIEDLRTKIAELEKQYPALDLEGPR. 3 disordered regions span residues 714–765, 786–836, and 880–944; these read RTLE…SGPQ, DAQQ…GNNC, and PALQ…MGIS. Residues 735–1124 enclose the FH1 domain; it reads PPPKAPPEGL…GCGFLFPPLP (390 aa). The segment covering 786–795 has biased composition (polar residues); that stretch reads DAQQIQSASQ. The span at 803–817 shows a compositional bias: low complexity; it reads LGSDSQGQPSQPSLH. The segment covering 818-827 has biased composition (basic and acidic residues); sequence TESETSHEHS. The span at 893 to 944 shows a compositional bias: pro residues; it reads LPAPPQPPPLPGLGVPPPPPAPPLPGMGIPPPPPLPGMGIPPPPPLPGMGIS. 12 tandem repeats follow at residues 919-929, 930-940, 941-951, 952-962, 963-973, 974-984, 985-995, 996-1006, 1007-1017, 1018-1028, 1029-1039, and 1040-1050. Residues 919–1039 form a 12 X 11 AA tandem repeats of [MV]-G-I-P-P-P-P-P-L-P-G region; the sequence is MGIPPPPPLP…GIPPPPPLPG (121 aa). Positions 1037–1097 are enriched in pro residues; it reads LPGVGIPPPP…PPPPLLPGSG (61 aa). A disordered region spans residues 1037–1108; the sequence is LPGVGIPPPP…PHSSQVGSST (72 aa). In terms of domain architecture, FH2 spans 1139–1554; that stretch reads RKQLIEPCRP…KEAEEVCRQK (416 aa). A coiled-coil region spans residues 1419-1455; sequence QELFQASQMKFEDFQKDLRKLKKDLKACEAEAGKVYQ. The important for interaction with SPIRE1 stretch occupies residues 1571 to 1578; that stretch reads KAKISMKT.

The protein belongs to the formin homology family. Cappuccino subfamily. In terms of assembly, interacts with SPIRE1. Binds actin. Interacts with CDKN1A. Detected in brain and in oocytes (at protein level). Expressed almost exclusively in the developing and mature central nervous system. Detected in oocytes.

It is found in the cytoplasm. The protein localises to the cytoskeleton. Its subcellular location is the cytosol. The protein resides in the perinuclear region. It localises to the nucleus. It is found in the nucleolus. The protein localises to the cell membrane. Its subcellular location is the cell cortex. The protein resides in the cytoplasmic vesicle membrane. Its function is as follows. Actin-binding protein that is involved in actin cytoskeleton assembly and reorganization. Acts as an actin nucleation factor and promotes assembly of actin filaments together with SPIRE1 and SPIRE2. Involved in intracellular vesicle transport along actin fibers, providing a novel link between actin cytoskeleton dynamics and intracellular transport. Required for asymmetric spindle positioning, asymmetric oocyte division and polar body extrusion during female germ cell meiosis. Plays a role in responses to DNA damage, cellular stress and hypoxia by protecting CDKN1A against degradation, and thereby plays a role in stress-induced cell cycle arrest. Also acts in the nucleus: together with SPIRE1 and SPIRE2, promotes assembly of nuclear actin filaments in response to DNA damage in order to facilitate movement of chromatin and repair factors after DNA damage. Protects cells against apoptosis by protecting CDKN1A against degradation. This Mus musculus (Mouse) protein is Formin-2 (Fmn2).